A 779-amino-acid polypeptide reads, in one-letter code: Transcription factor SPT20 homolog (779 aa).

Residue serine 296 is modified to Phosphoserine. 2 disordered regions span residues 373–392 (DEESDSQMSPSHSSTDDHSN) and 420–507 (PVKM…IPRK). Low complexity predominate over residues 424–437 (SHSSSGSASLSQVS). The segment covering 445–454 (TETVSVQSSV) has biased composition (polar residues). The segment covering 470–479 (SSSGNSSSGN) has biased composition (low complexity). The residue at position 494 (threonine 494) is a Phosphothreonine. 2 positions are modified to phosphoserine: serine 519 and serine 524. Disordered regions lie at residues 641-677 (QLSQFTPQQPQQPTTCSPQQPGEQGSEQGSTSQEQAL) and 755-779 (LHHHRHTGSQSKSKMKRGTPTTPKF). A compositionally biased stretch (basic residues) spans 755 to 771 (LHHHRHTGSQSKSKMKR).

Belongs to the SPT20 family. As to quaternary structure, interacts with MAPK14. Interacts with ATG9A. Highly expressed in testis, moderately in brain and pituitary gland. Expressed in several fetal tissues, including lung, brain, thymus and kidney. Expression is down-regulated in malignant prostate tissues.

The protein resides in the nucleus. Required for MAP kinase p38 (MAPK11, MAPK12, MAPK13 and/or MAPK14) activation during gastrulation. Required for down-regulation of E-cadherin during gastrulation by regulating E-cadherin protein level downstream from NCK-interacting kinase (NIK) and independently of the regulation of transcription by FGF signaling and Snail. Required for starvation-induced ATG9A trafficking during autophagy. The protein is Transcription factor SPT20 homolog (SUPT20H) of Homo sapiens (Human).